The chain runs to 118 residues: Large ribosomal subunit protein bL21c (118 aa).

Belongs to the bacterial ribosomal protein bL21 family. In terms of assembly, part of the 50S ribosomal subunit.

It localises to the plastid. Its subcellular location is the chloroplast. In terms of biological role, this protein binds to 23S rRNA. In Psilotum nudum (Whisk fern), this protein is Large ribosomal subunit protein bL21c.